The sequence spans 494 residues: Transcriptional regulator calD (494 aa).

Its subcellular location is the nucleus. In terms of biological role, transcription co-regulator that might be involved in the regulation of the expression of the gene cluster that mediates the biosynthesis of calbistrins and related compounds such as decumbenones. Calbistrin A is a secondary metabolite with an interesting structure that was recently found to have bioactivity against leukemia cells. It consists of two polyketides linked by an ester bond: a bicyclic decalin containing polyketide and a linear 12 carbon dioic acid structure. The protein is Transcriptional regulator calD of Penicillium decumbens.